The chain runs to 193 residues: dTTP/UTP pyrophosphatase (193 aa).

Asp77 (proton acceptor) is an active-site residue.

It belongs to the Maf family. YhdE subfamily. The cofactor is a divalent metal cation.

It is found in the cytoplasm. It catalyses the reaction dTTP + H2O = dTMP + diphosphate + H(+). The enzyme catalyses UTP + H2O = UMP + diphosphate + H(+). Nucleoside triphosphate pyrophosphatase that hydrolyzes dTTP and UTP. May have a dual role in cell division arrest and in preventing the incorporation of modified nucleotides into cellular nucleic acids. The polypeptide is dTTP/UTP pyrophosphatase (Phocaeicola vulgatus (strain ATCC 8482 / DSM 1447 / JCM 5826 / CCUG 4940 / NBRC 14291 / NCTC 11154) (Bacteroides vulgatus)).